A 279-amino-acid polypeptide reads, in one-letter code: tRNA-cytidine(32) 2-sulfurtransferase (279 aa).

Positions 46–51 (SGGKDS) match the PP-loop motif motif. Positions 121, 124, and 212 each coordinate [4Fe-4S] cluster.

This sequence belongs to the TtcA family. In terms of assembly, homodimer. Mg(2+) is required as a cofactor. The cofactor is [4Fe-4S] cluster.

The protein localises to the cytoplasm. The catalysed reaction is cytidine(32) in tRNA + S-sulfanyl-L-cysteinyl-[cysteine desulfurase] + AH2 + ATP = 2-thiocytidine(32) in tRNA + L-cysteinyl-[cysteine desulfurase] + A + AMP + diphosphate + H(+). The protein operates within tRNA modification. In terms of biological role, catalyzes the ATP-dependent 2-thiolation of cytidine in position 32 of tRNA, to form 2-thiocytidine (s(2)C32). The sulfur atoms are provided by the cysteine/cysteine desulfurase (IscS) system. The protein is tRNA-cytidine(32) 2-sulfurtransferase of Marinomonas sp. (strain MWYL1).